We begin with the raw amino-acid sequence, 581 residues long: MSESWQQPPQTQPQQPQAPQPQHHAETPPALAEHTLPPGSAENPLGCAVYGILLQPDPGLQPPQHAPLQAGEPGPKCGVCGHDLAHLSSPHEHQCLAGHDRSFQCTQCLKIFHQATDLLEHQCVQAEQKPFVCGVCKMGFSLLTSLAQHHSSHTGMVKCSICDKTYKPAEAAEPATTTAPSLPSAPPPANIAPVEQPEKPYSCPVCQKPFKHLSELSRHERIHTGEKPYKCTLCDKSFSQSSHLVHHKRTHSSERPYKCAVCEKTFKHRSHLVRHMYAHSGEHHLFRCNVCELHFKESSELLQHPCTPSGERPFRCGECQKAFKRPSDLRQHERTHSAERPFKCDLCPMGFKQQYALMRHRRTHKTEEPFKCGLCEKGFGQPSHLLYHQHVHTLETLFKCPVCQKGFDQSAELLRHKCLPTSTERPFKCPVCNKAYKRASALQKHQLSHCAAAEKPLRCTLCERRFFSSSEFVQHRCDPAREKPLKCPDCEKRFKYASDLQRHRRVHTGEKPYKCPSCDKAFKQREHLNKHQGVHAREQQFKCVWCGERFLDVALLQEHSAQHSAAAAAAEGAYQVAACLP.

Residues 1 to 22 show a composition bias toward low complexity; that stretch reads MSESWQQPPQTQPQQPQAPQPQ. The segment at 1–39 is disordered; it reads MSESWQQPPQTQPQQPQAPQPQHHAETPPALAEHTLPPG. The C2H2-type 1 zinc-finger motif lies at 75-99; the sequence is PKCGVCGHDLAHLSSPHEHQCLAGH. The segment at 103-125 adopts a C2H2-type 2; degenerate zinc-finger fold; it reads FQCTQCLKIFHQATDLLEHQCVQ. Residue Lys129 forms a Glycyl lysine isopeptide (Lys-Gly) (interchain with G-Cter in SUMO2) linkage. 4 consecutive C2H2-type zinc fingers follow at residues 131–153, 201–223, 229–251, and 257–279; these read FVCGVCKMGFSLLTSLAQHHSSH, YSCPVCQKPFKHLSELSRHERIH, YKCTLCDKSFSQSSHLVHHKRTH, and YKCAVCEKTFKHRSHLVRHMYAH. Position 280 is a phosphoserine (Ser280). Residues 286–308 form a C2H2-type 7; degenerate zinc finger; it reads FRCNVCELHFKESSELLQHPCTP. 3 C2H2-type zinc fingers span residues 314–336, 342–364, and 370–392; these read FRCGECQKAFKRPSDLRQHERTH, FKCDLCPMGFKQQYALMRHRRTH, and FKCGLCEKGFGQPSHLLYHQHVH. The segment at 398 to 420 adopts a C2H2-type 11; degenerate zinc-finger fold; that stretch reads FKCPVCQKGFDQSAELLRHKCLP. The C2H2-type 12 zinc finger occupies 427-449; it reads FKCPVCNKAYKRASALQKHQLSH. The C2H2-type 13; degenerate zinc finger occupies 457 to 479; the sequence is LRCTLCERRFFSSSEFVQHRCDP. 3 C2H2-type zinc fingers span residues 485 to 507, 513 to 535, and 541 to 563; these read LKCPDCEKRFKYASDLQRHRRVH, YKCPSCDKAFKQREHLNKHQGVH, and FKCVWCGERFLDVALLQEHSAQH.

This sequence belongs to the krueppel C2H2-type zinc-finger protein family.

Its subcellular location is the nucleus. May be involved in transcriptional regulation. The sequence is that of Zinc finger protein 319 (Znf319) from Mus musculus (Mouse).